Reading from the N-terminus, the 180-residue chain is Probable galaptin lec-8 (180 aa).

In terms of domain architecture, Galectin spans 11-138 (SAHAIREQLR…AAHIDEISFS (128 aa)).

This is Probable galaptin lec-8 (lec-8) from Caenorhabditis elegans.